Reading from the N-terminus, the 183-residue chain is Senescence-associated protein DIN1 (183 aa).

Residues 83 to 183 enclose the Rhodanese domain; it reads AQAGYKHLDV…WTENELPVEE (101 aa).

Its function is as follows. Is thought to act during the early stages of leaf senescence. This is Senescence-associated protein DIN1 (DIN1) from Raphanus sativus (Radish).